Reading from the N-terminus, the 650-residue chain is Serine/threonine-protein kinase oca2 (650 aa).

The segment covering Met1–Gly14 has biased composition (polar residues). Disordered stretches follow at residues Met1–Ile210 and His222–Ala288. A Phosphoserine modification is found at Ser72. The span at Asn78 to Glu98 shows a compositional bias: basic and acidic residues. A compositionally biased stretch (polar residues) spans Pro140–Asn154. Basic residues-rich tracts occupy residues His222–His231 and His245–His257. Positions His258–Pro279 are enriched in basic and acidic residues. Phosphoserine is present on Ser286. In terms of domain architecture, Protein kinase spans Gly302–Ile614. Residues Leu308–Val316 and Lys331 each bind ATP. Asp425 serves as the catalytic Proton acceptor. Residues Pro549–Lys570 form a disordered region.

The protein belongs to the protein kinase superfamily. Ser/Thr protein kinase family.

It is found in the cytoplasm. It carries out the reaction L-seryl-[protein] + ATP = O-phospho-L-seryl-[protein] + ADP + H(+). The catalysed reaction is L-threonyl-[protein] + ATP = O-phospho-L-threonyl-[protein] + ADP + H(+). Its function is as follows. Overexpression causes cell cycle arrest. The sequence is that of Serine/threonine-protein kinase oca2 from Schizosaccharomyces pombe (strain 972 / ATCC 24843) (Fission yeast).